Consider the following 349-residue polypeptide: DNA polymerase IV (349 aa).

The 182-residue stretch at 4 to 185 (IIHIDCDCFY…LPVAKLHGVG (182 aa)) folds into the UmuC domain. Mg(2+)-binding residues include Asp-8 and Asp-103. Residue Glu-104 is part of the active site.

This sequence belongs to the DNA polymerase type-Y family. Monomer. Mg(2+) serves as cofactor.

It localises to the cytoplasm. The enzyme catalyses DNA(n) + a 2'-deoxyribonucleoside 5'-triphosphate = DNA(n+1) + diphosphate. Poorly processive, error-prone DNA polymerase involved in untargeted mutagenesis. Copies undamaged DNA at stalled replication forks, which arise in vivo from mismatched or misaligned primer ends. These misaligned primers can be extended by PolIV. Exhibits no 3'-5' exonuclease (proofreading) activity. May be involved in translesional synthesis, in conjunction with the beta clamp from PolIII. The polypeptide is DNA polymerase IV (Pseudomonas aeruginosa (strain UCBPP-PA14)).